The chain runs to 333 residues: Protoheme IX farnesyltransferase (333 aa).

Helical transmembrane passes span 64–84 (LICT…LNCL), 110–130 (TVFL…ISGV), 133–153 (LAAG…TVIL), 161–181 (IVFG…AATG), 189–209 (WLFG…AILL), 246–266 (IMGV…LLPF), and 287–307 (AKSL…LLLI).

The protein belongs to the UbiA prenyltransferase family. Protoheme IX farnesyltransferase subfamily.

It is found in the cell inner membrane. It catalyses the reaction heme b + (2E,6E)-farnesyl diphosphate + H2O = Fe(II)-heme o + diphosphate. Its pathway is porphyrin-containing compound metabolism; heme O biosynthesis; heme O from protoheme: step 1/1. Converts heme B (protoheme IX) to heme O by substitution of the vinyl group on carbon 2 of heme B porphyrin ring with a hydroxyethyl farnesyl side group. This is Protoheme IX farnesyltransferase from Prochlorococcus marinus (strain MIT 9312).